Here is a 306-residue protein sequence, read N- to C-terminus: ATP synthase gamma chain (306 aa).

It belongs to the ATPase gamma chain family. As to quaternary structure, F-type ATPases have 2 components, CF(1) - the catalytic core - and CF(0) - the membrane proton channel. CF(1) has five subunits: alpha(3), beta(3), gamma(1), delta(1), epsilon(1). CF(0) has three main subunits: a, b and c.

It localises to the cell membrane. Its function is as follows. Produces ATP from ADP in the presence of a proton gradient across the membrane. The gamma chain is believed to be important in regulating ATPase activity and the flow of protons through the CF(0) complex. The sequence is that of ATP synthase gamma chain from Bifidobacterium animalis subsp. lactis (strain AD011).